Here is a 318-residue protein sequence, read N- to C-terminus: MYFMNLLTTIIPILLAVAFLTLLERKVLGYMQLRKGPNIVGPYGLLQPIADAIKLFTKEPLQPLTSSHVLFIIAPTLALTLALMMWIPLPMPHPLTNMNLSILFMLALSSLAVYGIMWSGWASNSKYALIGALRAVAQTISYEVTLAIIILSILLMNGSFALSTLITTQEHIWLILPSWPLAMMWFISTLAETNRAPFDLTEGESELVSGFNVEYAGGPSALFFLAEYANIIMMNALTIILFLGAHNNPMFPELYTTNFMIKALVLTTLFLWVRASYPRFRYDQLMHLLWKNFLPLTLVMCMWHVTLPIILAGIPPQT.

8 helical membrane-spanning segments follow: residues 3-23, 69-89, 102-122, 146-166, 171-191, 222-242, 253-273, and 294-314; these read FMNLLTTIIPILLAVAFLTLL, VLFIIAPTLALTLALMMWIPL, ILFMLALSSLAVYGIMWSGWA, LAIIILSILLMNGSFALSTLI, HIWLILPSWPLAMMWFISTLA, LFFLAEYANIIMMNALTIILF, ELYTTNFMIKALVLTTLFLWV, and LPLTLVMCMWHVTLPIILAGI.

This sequence belongs to the complex I subunit 1 family. As to quaternary structure, core subunit of respiratory chain NADH dehydrogenase (Complex I) which is composed of 45 different subunits.

Its subcellular location is the mitochondrion inner membrane. It carries out the reaction a ubiquinone + NADH + 5 H(+)(in) = a ubiquinol + NAD(+) + 4 H(+)(out). In terms of biological role, core subunit of the mitochondrial membrane respiratory chain NADH dehydrogenase (Complex I) which catalyzes electron transfer from NADH through the respiratory chain, using ubiquinone as an electron acceptor. Essential for the catalytic activity and assembly of complex I. The polypeptide is NADH-ubiquinone oxidoreductase chain 1 (MT-ND1) (Cnephaeus nilssonii (Northern bat)).